We begin with the raw amino-acid sequence, 231 residues long: 6-phosphogluconolactonase (231 aa).

Belongs to the glucosamine/galactosamine-6-phosphate isomerase family. 6-phosphogluconolactonase subfamily.

It carries out the reaction 6-phospho-D-glucono-1,5-lactone + H2O = 6-phospho-D-gluconate + H(+). Its pathway is carbohydrate degradation; pentose phosphate pathway; D-ribulose 5-phosphate from D-glucose 6-phosphate (oxidative stage): step 2/3. In terms of biological role, hydrolysis of 6-phosphogluconolactone to 6-phosphogluconate. This Neisseria meningitidis serogroup A / serotype 4A (strain DSM 15465 / Z2491) protein is 6-phosphogluconolactonase (pgl).